We begin with the raw amino-acid sequence, 446 residues long: Probable D-serine dehydratase (446 aa).

Lysine 116 bears the N6-(pyridoxal phosphate)lysine mark.

The protein belongs to the serine/threonine dehydratase family. DsdA subfamily. The cofactor is pyridoxal 5'-phosphate.

It catalyses the reaction D-serine = pyruvate + NH4(+). This is Probable D-serine dehydratase from Bacillus thuringiensis (strain Al Hakam).